We begin with the raw amino-acid sequence, 189 residues long: GMP synthase [glutamine-hydrolyzing] subunit A (189 aa).

The Glutamine amidotransferase type-1 domain maps to 3 to 187 (RIDVIDNHGQ…LSVCDQQSVA (185 aa)). Cysteine 73 functions as the Nucleophile in the catalytic mechanism. Residues histidine 161 and glutamate 163 contribute to the active site.

In terms of assembly, heterodimer composed of a glutamine amidotransferase subunit (A) and a GMP-binding subunit (B).

The enzyme catalyses XMP + L-glutamine + ATP + H2O = GMP + L-glutamate + AMP + diphosphate + 2 H(+). It functions in the pathway purine metabolism; GMP biosynthesis; GMP from XMP (L-Gln route): step 1/1. Functionally, catalyzes the synthesis of GMP from XMP. The chain is GMP synthase [glutamine-hydrolyzing] subunit A from Haloarcula marismortui (strain ATCC 43049 / DSM 3752 / JCM 8966 / VKM B-1809) (Halobacterium marismortui).